The sequence spans 547 residues: Chaperonin GroEL (547 aa).

ATP-binding positions include 30 to 33 (TLGP), K51, 87 to 91 (DGTTT), G415, and D496. Positions 527–547 (SDKEEPMPMRGGMGGMGGMDF) are disordered. A compositionally biased stretch (gly residues) spans 537-547 (GGMGGMGGMDF).

The protein belongs to the chaperonin (HSP60) family. Forms a cylinder of 14 subunits composed of two heptameric rings stacked back-to-back. Interacts with the co-chaperonin GroES.

The protein localises to the cytoplasm. The enzyme catalyses ATP + H2O + a folded polypeptide = ADP + phosphate + an unfolded polypeptide.. In terms of biological role, together with its co-chaperonin GroES, plays an essential role in assisting protein folding. The GroEL-GroES system forms a nano-cage that allows encapsulation of the non-native substrate proteins and provides a physical environment optimized to promote and accelerate protein folding. The sequence is that of Chaperonin GroEL from Rickettsia massiliae (strain Mtu5).